We begin with the raw amino-acid sequence, 261 residues long: tRNA pseudouridine synthase A (261 aa).

Asp-51 serves as the catalytic Nucleophile. Tyr-109 serves as a coordination point for substrate.

Belongs to the tRNA pseudouridine synthase TruA family. In terms of assembly, homodimer.

It carries out the reaction uridine(38/39/40) in tRNA = pseudouridine(38/39/40) in tRNA. In terms of biological role, formation of pseudouridine at positions 38, 39 and 40 in the anticodon stem and loop of transfer RNAs. This chain is tRNA pseudouridine synthase A, found in Shewanella baltica (strain OS195).